A 66-amino-acid polypeptide reads, in one-letter code: Large ribosomal subunit protein bL33c (66 aa).

The protein belongs to the bacterial ribosomal protein bL33 family.

The protein localises to the plastid. Its subcellular location is the chloroplast. This chain is Large ribosomal subunit protein bL33c, found in Populus alba (White poplar).